The following is a 159-amino-acid chain: Endoribonuclease YbeY (159 aa).

Zn(2+) is bound by residues H122, H126, and H132.

The protein belongs to the endoribonuclease YbeY family. Zn(2+) serves as cofactor.

Its subcellular location is the cytoplasm. Single strand-specific metallo-endoribonuclease involved in late-stage 70S ribosome quality control and in maturation of the 3' terminus of the 16S rRNA. In Roseiflexus castenholzii (strain DSM 13941 / HLO8), this protein is Endoribonuclease YbeY.